The chain runs to 342 residues: Hydrogenase expression/formation protein HupV (342 aa).

This sequence belongs to the HupK family.

This chain is Hydrogenase expression/formation protein HupV (hupV), found in Azotobacter chroococcum mcd 1.